A 247-amino-acid chain; its full sequence is MADS-box protein defh21 (247 aa).

Residues 1–61 (MGRGKIEVKR…GKLTEYCTPP (61 aa)) enclose the MADS-box domain. In terms of domain architecture, K-box spans 91 to 183 (NDQVIKELTR…WLMSNQIQRQ (93 aa)).

As to expression, expressed exclusively in a few inner cell layers of the inner integuments of the ovules.

The protein resides in the nucleus. Probable transcription factor. This chain is MADS-box protein defh21 (DEFH21), found in Antirrhinum majus (Garden snapdragon).